The primary structure comprises 157 residues: MLCPHCHQNSSRVIDSRPTDEGRVIRRRRECENCQFRFTTFERVEQTPLLVIKKNGTREEFNRDKLLRGLIRAAEKRPVTMEQMTEIVDEVENKIRALGENEVSSQAVGEYVMAVLPGVDEIAYIRFASVYRQFKDMNVFMAELQEMMKKEKARDQD.

The segment at 3–34 is a zinc-finger region; sequence CPHCHQNSSRVIDSRPTDEGRVIRRRRECENC. The ATP-cone domain occupies 49 to 139; sequence LLVIKKNGTR…VYRQFKDMNV (91 aa).

This sequence belongs to the NrdR family. Zn(2+) is required as a cofactor.

Functionally, negatively regulates transcription of bacterial ribonucleotide reductase nrd genes and operons by binding to NrdR-boxes. This Latilactobacillus sakei subsp. sakei (strain 23K) (Lactobacillus sakei subsp. sakei) protein is Transcriptional repressor NrdR.